Here is a 249-residue protein sequence, read N- to C-terminus: Triosephosphate isomerase (249 aa).

Substrate-binding residues include asparagine 12 and lysine 14. An N6-acetyllysine modification is found at lysine 14. Residue tyrosine 68 is modified to 3'-nitrotyrosine. Residue serine 80 is modified to Phosphoserine. The active-site Electrophile is histidine 96. Serine 106 carries the post-translational modification Phosphoserine. Residue lysine 142 forms a Glycyl lysine isopeptide (Lys-Gly) (interchain with G-Cter in SUMO1) linkage. An N6-succinyllysine modification is found at lysine 149. Lysine 156 carries the N6-acetyllysine; alternate modification. Residue lysine 156 is modified to N6-succinyllysine; alternate. Residue serine 159 is modified to Phosphoserine. The active-site Proton acceptor is glutamate 166. At threonine 173 the chain carries Phosphothreonine. Lysine 194 is subject to N6-acetyllysine; alternate. Lysine 194 bears the N6-succinyllysine; alternate mark. An N6-methyllysine; alternate modification is found at lysine 194. Phosphoserine is present on serine 198. Tyrosine 209 carries the 3'-nitrotyrosine modification. Serine 212 bears the Phosphoserine mark. Threonine 214 is modified (phosphothreonine). Serine 223 bears the Phosphoserine mark. Lysine 238 carries the post-translational modification N6-acetyllysine.

It belongs to the triosephosphate isomerase family. Homodimer.

Its subcellular location is the cytoplasm. The enzyme catalyses dihydroxyacetone phosphate = methylglyoxal + phosphate. It carries out the reaction D-glyceraldehyde 3-phosphate = dihydroxyacetone phosphate. Its pathway is carbohydrate degradation; glycolysis; D-glyceraldehyde 3-phosphate from glycerone phosphate: step 1/1. It functions in the pathway carbohydrate biosynthesis; gluconeogenesis. In terms of biological role, triosephosphate isomerase is an extremely efficient metabolic enzyme that catalyzes the interconversion between dihydroxyacetone phosphate (DHAP) and D-glyceraldehyde-3-phosphate (G3P) in glycolysis and gluconeogenesis. It is also responsible for the non-negligible production of methylglyoxal a reactive cytotoxic side-product that modifies and can alter proteins, DNA and lipids. The protein is Triosephosphate isomerase (TPI1) of Gorilla gorilla gorilla (Western lowland gorilla).